Here is a 201-residue protein sequence, read N- to C-terminus: Small ribosomal subunit protein uS4c (201 aa).

The S4 RNA-binding domain occupies 91–151 (MRLDNIIFQL…TKNPEELRTI (61 aa)).

It belongs to the universal ribosomal protein uS4 family. In terms of assembly, part of the 30S ribosomal subunit. Contacts protein S5. The interaction surface between S4 and S5 is involved in control of translational fidelity.

It localises to the plastid. Its subcellular location is the chloroplast. Functionally, one of the primary rRNA binding proteins, it binds directly to 16S rRNA where it nucleates assembly of the body of the 30S subunit. In terms of biological role, with S5 and S12 plays an important role in translational accuracy. This Welwitschia mirabilis (Tree tumbo) protein is Small ribosomal subunit protein uS4c (rps4).